We begin with the raw amino-acid sequence, 236 residues long: Phosphoribosylaminoimidazole-succinocarboxamide synthase (236 aa).

It belongs to the SAICAR synthetase family.

The catalysed reaction is 5-amino-1-(5-phospho-D-ribosyl)imidazole-4-carboxylate + L-aspartate + ATP = (2S)-2-[5-amino-1-(5-phospho-beta-D-ribosyl)imidazole-4-carboxamido]succinate + ADP + phosphate + 2 H(+). Its pathway is purine metabolism; IMP biosynthesis via de novo pathway; 5-amino-1-(5-phospho-D-ribosyl)imidazole-4-carboxamide from 5-amino-1-(5-phospho-D-ribosyl)imidazole-4-carboxylate: step 1/2. This is Phosphoribosylaminoimidazole-succinocarboxamide synthase from Lysinibacillus sphaericus (strain C3-41).